We begin with the raw amino-acid sequence, 482 residues long: 2-succinylbenzoate--CoA ligase (482 aa).

Belongs to the ATP-dependent AMP-binding enzyme family. MenE subfamily.

The catalysed reaction is 2-succinylbenzoate + ATP + CoA = 2-succinylbenzoyl-CoA + AMP + diphosphate. The protein operates within quinol/quinone metabolism; 1,4-dihydroxy-2-naphthoate biosynthesis; 1,4-dihydroxy-2-naphthoate from chorismate: step 5/7. It participates in quinol/quinone metabolism; menaquinone biosynthesis. In terms of biological role, converts 2-succinylbenzoate (OSB) to 2-succinylbenzoyl-CoA (OSB-CoA). The chain is 2-succinylbenzoate--CoA ligase from Bacillus thuringiensis subsp. konkukian (strain 97-27).